A 504-amino-acid chain; its full sequence is Probable cytochrome P450 513E1 (504 aa).

Residues 1 to 21 traverse the membrane as a helical segment; the sequence is MNLYISILILIISLIIFFKNN. Cys-450 lines the heme pocket.

Belongs to the cytochrome P450 family. The cofactor is heme.

The protein resides in the membrane. The chain is Probable cytochrome P450 513E1 (cyp513E1) from Dictyostelium discoideum (Social amoeba).